Consider the following 477-residue polypeptide: Glutamate--tRNA ligase 2 (477 aa).

The short motif at 12–22 (PSPTGRMHLGN) is the 'HIGH' region element. Positions 109, 111, 136, and 138 each coordinate Zn(2+). The short motif at 253–257 (PLSKR) is the 'KMSKS' region element. ATP is bound at residue lysine 256.

It belongs to the class-I aminoacyl-tRNA synthetase family. Glutamate--tRNA ligase type 1 subfamily. As to quaternary structure, monomer. Zn(2+) serves as cofactor.

The protein resides in the cytoplasm. The catalysed reaction is tRNA(Glu) + L-glutamate + ATP = L-glutamyl-tRNA(Glu) + AMP + diphosphate. Its function is as follows. Catalyzes the attachment of glutamate to tRNA(Glu) in a two-step reaction: glutamate is first activated by ATP to form Glu-AMP and then transferred to the acceptor end of tRNA(Glu). The chain is Glutamate--tRNA ligase 2 from Alkalilimnicola ehrlichii (strain ATCC BAA-1101 / DSM 17681 / MLHE-1).